The primary structure comprises 318 residues: MAHQRIVGPTIECIESRIESRRNHYGRFVIAPLEIGQGITVGNVFRRVLLGDLEGACITSVQIPGVNHEFSTIHGVREAVLDILLNLKEIVLKTQSQETQRGHLSVQGPSTVLARDLQLPSSIELVDPDQYIATISGRVSLNMEFTVEVGKGYQLPDYEKKKTFQVDVLPIDAVFMPVTKVNYTVEENYGGDRSQERVIIEVWTNGSINSRQAIDLSVNKIINLFSPLQNVRSIEHEPLVKEKDSKMTEVLVEELDLSVRAYNCLKRAQIHTVSDLLSYSQEDLLEIKNFGRRSAEEVIEGLQKRLGIHLPKEKFTKD.

The segment at Met1–Arg232 is alpha N-terminal domain (alpha-NTD). Residues Lys246 to Asp318 are alpha C-terminal domain (alpha-CTD).

It belongs to the RNA polymerase alpha chain family. As to quaternary structure, in plastids the minimal PEP RNA polymerase catalytic core is composed of four subunits: alpha, beta, beta', and beta''. When a (nuclear-encoded) sigma factor is associated with the core the holoenzyme is formed, which can initiate transcription.

Its subcellular location is the plastid. The protein localises to the chloroplast. It carries out the reaction RNA(n) + a ribonucleoside 5'-triphosphate = RNA(n+1) + diphosphate. Its function is as follows. DNA-dependent RNA polymerase catalyzes the transcription of DNA into RNA using the four ribonucleoside triphosphates as substrates. This chain is DNA-directed RNA polymerase subunit alpha, found in Chlorokybus atmophyticus (Soil alga).